The following is a 323-amino-acid chain: Homoserine kinase (323 aa).

97–107 (PHGRGMGSSGA) contacts ATP.

This sequence belongs to the GHMP kinase family. Homoserine kinase subfamily.

The protein localises to the cytoplasm. The enzyme catalyses L-homoserine + ATP = O-phospho-L-homoserine + ADP + H(+). Its pathway is amino-acid biosynthesis; L-threonine biosynthesis; L-threonine from L-aspartate: step 4/5. Its function is as follows. Catalyzes the ATP-dependent phosphorylation of L-homoserine to L-homoserine phosphate. This is Homoserine kinase from Leifsonia xyli subsp. xyli (strain CTCB07).